Reading from the N-terminus, the 603-residue chain is Aspartate--tRNA(Asp/Asn) ligase (603 aa).

Residue Glu187 coordinates L-aspartate. Residues 211-214 (QQFK) are aspartate. 2 residues coordinate L-aspartate: Arg233 and His461. An ATP-binding site is contributed by 233–235 (RDE). Residue Glu495 participates in ATP binding. Position 502 (Arg502) interacts with L-aspartate. Residue 547-550 (GLDR) coordinates ATP.

This sequence belongs to the class-II aminoacyl-tRNA synthetase family. Type 1 subfamily. In terms of assembly, homodimer.

It localises to the cytoplasm. The enzyme catalyses tRNA(Asx) + L-aspartate + ATP = L-aspartyl-tRNA(Asx) + AMP + diphosphate. Functionally, aspartyl-tRNA synthetase with relaxed tRNA specificity since it is able to aspartylate not only its cognate tRNA(Asp) but also tRNA(Asn). Reaction proceeds in two steps: L-aspartate is first activated by ATP to form Asp-AMP and then transferred to the acceptor end of tRNA(Asp/Asn). The sequence is that of Aspartate--tRNA(Asp/Asn) ligase from Chlorobaculum parvum (strain DSM 263 / NCIMB 8327) (Chlorobium vibrioforme subsp. thiosulfatophilum).